A 274-amino-acid polypeptide reads, in one-letter code: MASKSGDGGTMCALEFTVQMSCQSCVDAVHKTLKGAAGVQNVEVQLENQMVLVQTTLPSQEVQALLESTGRQAVLKGMGSSQLKNLGAAVAIMEGSGTVQGVVRFLQLSSELCLIEGTIDGLEPGLHGLHVHQYGDLTKDCSSCGDHFNPDGASHGGPQDTDRHRGDLGNVHAEASGRATFRIEDKQLKVWDVIGRSLVVDEGEDDLGRGGHPLSKVTGNSGKRLACGIIARSAGLFQNPKQICSCDGLTIWEERGRPIAGQGRKDSAQPPAHL.

An HMA domain is found at 11 to 74 (MCALEFTVQM…LLESTGRQAV (64 aa)). Positions 22 and 25 each coordinate Cu cation. A Glycyl lysine isopeptide (Lys-Gly) (interchain with G-Cter in ubiquitin) cross-link involves residue Lys-76. Positions 88 to 234 (AAVAIMEGSG…LACGIIARSA (147 aa)) are superoxide dismutase-like. Cysteines 141 and 227 form a disulfide. Zn(2+) contacts are provided by His-147, His-155, His-164, and Asp-167. Glycyl lysine isopeptide (Lys-Gly) (interchain with G-Cter in ubiquitin) cross-links involve residues Lys-189, Lys-216, and Lys-241. Positions 244 and 246 each coordinate Cu cation. The residue at position 267 (Ser-267) is a Phosphoserine.

In the C-terminal section; belongs to the Cu-Zn superoxide dismutase family. In terms of assembly, homodimer, and heterodimer with SOD1. Interacts with COMMD1. Interacts with XIAP/BIRC4. Interacts with SLC31A1(via C-terminal domain); this interaction is Cu(1+)-mediated. The heterodimer CCS:SOD1 interacts with SLC31A1; this heterotrimer is Cu(1+)-mediated and its maintenance is regulated through SOD1 activation. Requires Cu(2+) as cofactor. Zn(2+) is required as a cofactor. Ubiquitinion by XIAP/BIRC4 leads to enhancement of its chaperone activity toward its physiologic target, SOD1, rather than proteasomal degradation. XIAP/BIRC4 preferentially ubiquitinates at Lys-241.

It is found in the cytoplasm. Its function is as follows. Delivers copper to copper zinc superoxide dismutase (SOD1). This chain is Copper chaperone for superoxide dismutase, found in Rattus norvegicus (Rat).